Consider the following 2559-residue polypeptide: Nonribosomal peptide synthetase asqK (2559 aa).

An adenylation 1 region spans residues 90–474 (YRPSHTAIHA…SRKDSQVKIR (385 aa)). In terms of domain architecture, Carrier 1 spans 593–669 (TNIEQLVHEL…SLVHYPAGLE (77 aa)). Ser-627 carries the post-translational modification O-(pantetheine 4'-phosphoryl)serine. The interval 695–989 (TVEQSFSQAR…GNVQCIRTKV (295 aa)) is condensation 1. The segment at 1155–1562 (FDEQVRAQTD…GRMDQQVKVR (408 aa)) is adenylation 2. The interval 1681–1776 (LEIGTGSGMI…NTIKDLVRQG (96 aa)) is methyltransferase. A Carrier 2 domain is found at 2090–2164 (AFTSEIERAV…GLAQHLQGLG (75 aa)). Ser-2124 is modified (O-(pantetheine 4'-phosphoryl)serine). A condensation 2 region spans residues 2261-2409 (FDGVSLSAIL…VNRCLLRVKV (149 aa)).

This sequence belongs to the NRP synthetase family.

The catalysed reaction is O-methyl-L-tyrosine + anthranilate + S-adenosyl-L-methionine + 2 ATP = (-)-4'-methoxycyclopeptine + 2 AMP + S-adenosyl-L-homocysteine + 2 diphosphate + 2 H(+). It carries out the reaction anthranilate + L-phenylalanine + S-adenosyl-L-methionine + 2 ATP = cyclopeptine + 2 AMP + S-adenosyl-L-homocysteine + 2 diphosphate + 2 H(+). It functions in the pathway secondary metabolite biosynthesis. The protein operates within alkaloid biosynthesis. It participates in mycotoxin biosynthesis. Its function is as follows. Nonribosomal peptide synthetase; part of the gene cluster that mediates the biosynthesis of the aspoquinolone mycotoxins. The first stage is catalyzed by the nonribosomal peptide synthetase asqK that condenses anthranilic acid and O-methyl-L-tyrosine to produce 4'-methoxycyclopeptin. AsqK is also able to use anthranilic acid and L-phenylalanine as substrates to produce cyclopeptin, but at a tenfold lower rate. Within the pathway, 4'-methoxycyclopeptin is then converted to 4'-methoxydehydrocyclopeptin by the ketoglutarate-dependent dioxygenase asqJ. AsqJ also converts its first product 4'-methoxydehydrocyclopeptin to 4'-methoxycyclopenin. The following conversion of 4'-methoxycyclopenin into 4'-methoxyviridicatin is catalyzed by the cyclopenase asqI. 4'-methoxyviridicatin is the precursor of quinolone natural products, and is further converted to quinolinone B. The prenyltransferase asqH1 then catalyzes the canonical Friedel-Crafts alkylation of quinolinone B with dimethylallyl cation to yield dimethylallyl quinolone, which is subjected to FAD-dependent dehydrogenation by the FAD-linked oxidoreductase asqF to yield conjugated aryl diene. The delta(3') double bond then serves as the site of the second alkylation with DMAPP catalyzed by the prenyltransferase asqH2 to yield a carbenium ion intermediate, which can be attacked by H(2)O to yield a styrenyl quinolone containing a C3'-hydroxyprenyl chain. The FAD-dependent monooxygenase asqG performs epoxidation of the terminal C7'-C8' olefin. Finally, after dehydratation of the epoxide at C3 by asqC, the quinolone epoxide rearrangement protein asqO catalyzes an enzymatic 3-exo-tet cyclization to yield the cyclopropyl-THF ring system in aspoquinolone. This Emericella nidulans (strain FGSC A4 / ATCC 38163 / CBS 112.46 / NRRL 194 / M139) (Aspergillus nidulans) protein is Nonribosomal peptide synthetase asqK.